A 167-amino-acid chain; its full sequence is Large ribosomal subunit protein uL10 (167 aa).

It belongs to the universal ribosomal protein uL10 family. Part of the ribosomal stalk of the 50S ribosomal subunit. The N-terminus interacts with L11 and the large rRNA to form the base of the stalk. The C-terminus forms an elongated spine to which L12 dimers bind in a sequential fashion forming a multimeric L10(L12)X complex.

Its function is as follows. Forms part of the ribosomal stalk, playing a central role in the interaction of the ribosome with GTP-bound translation factors. This is Large ribosomal subunit protein uL10 from Psychromonas ingrahamii (strain DSM 17664 / CCUG 51855 / 37).